Reading from the N-terminus, the 326-residue chain is ELAV-like protein 1 (326 aa).

RRM domains are found at residues 20 to 98 (TNLI…VARP), 106 to 186 (ANLY…FAAN), and 244 to 322 (WCIF…FKTS).

This sequence belongs to the RRM elav family. In terms of assembly, interacts (via RRM3) with cirbp. Unable to form oligomers. Part of a ribonucleoprotein (RNP) complex, at least composed of elavl1/elrA and/or elavl2/elrB, igf2bp3/vg1RBP, ddx6/Xp54, ybx2/frgy2, lsm14b/rap55b and, in a subset of RNP complexes, stau1/staufen.

The protein resides in the cytoplasm. The protein localises to the cell cortex. RNA-binding protein that binds to the 3'-UTR region of mRNAs and increases their stability. Involved in embryonic stem cells (ESCs) differentiation: preferentially binds mRNAs that are not methylated by N6-methyladenosine (m6A), stabilizing them, promoting ESCs differentiation. Binds to poly-U elements and AU-rich elements (AREs) in the 3'-UTR of target mRNAs. Acts cooperatively with cribp to stabilize AU-rich sequence (ARE)-containing mRNAs. May play a role during gastrulation. Required for the vegetal localization of vg1 mRNA. This is ELAV-like protein 1 from Xenopus tropicalis (Western clawed frog).